The sequence spans 113 residues: uncharacterized protein (113 aa).

In terms of domain architecture, HTH hxlR-type spans 16-113; the sequence is TPFGYTLSLI…CEWGVKNQNN (98 aa).

This is an uncharacterized protein from Halalkalibacterium halodurans (strain ATCC BAA-125 / DSM 18197 / FERM 7344 / JCM 9153 / C-125) (Bacillus halodurans).